Here is a 144-residue protein sequence, read N- to C-terminus: Ribosome-binding factor A (144 aa).

Disordered regions lie at residues 1-22 (MPRH…QLRV) and 125-144 (TPAV…EEEQ). Over residues 134–144 (QDPDSDREEEQ) the composition is skewed to acidic residues.

Belongs to the RbfA family. Monomer. Binds 30S ribosomal subunits, but not 50S ribosomal subunits or 70S ribosomes.

Its subcellular location is the cytoplasm. Functionally, one of several proteins that assist in the late maturation steps of the functional core of the 30S ribosomal subunit. Associates with free 30S ribosomal subunits (but not with 30S subunits that are part of 70S ribosomes or polysomes). Required for efficient processing of 16S rRNA. May interact with the 5'-terminal helix region of 16S rRNA. This Bradyrhizobium diazoefficiens (strain JCM 10833 / BCRC 13528 / IAM 13628 / NBRC 14792 / USDA 110) protein is Ribosome-binding factor A.